The sequence spans 861 residues: Ribosome biogenesis protein BOP1 homolog (861 aa).

The interval Met1–Arg237 is disordered. Residues Asn29–Ser45 show a composition bias toward polar residues. 2 stretches are compositionally biased toward acidic residues: residues Asp62–Asp77 and Ser87–Ala143. Composition is skewed to basic and acidic residues over residues Glu144 to Lys156, Glu174 to Ala190, and Pro212 to Asp223. WD repeat units lie at residues Gly522–Thr561, Pro563–Ser603, Lys692–Lys730, Pro733–Gln772, Leu776–Gln815, and Val831–Thr861.

The protein belongs to the WD repeat BOP1/ERB1 family.

It localises to the nucleus. The protein localises to the nucleolus. Its subcellular location is the nucleoplasm. Its function is as follows. Required for maturation of ribosomal RNAs and formation of the large ribosomal subunit. This chain is Ribosome biogenesis protein BOP1 homolog, found in Culex quinquefasciatus (Southern house mosquito).